Consider the following 406-residue polypeptide: MDLCEESETFLENKENKKIEDAEETALTFHCPDERSERNHVCCLLGVSELTLEEDGRASEFTISTGWEEAVHGWGRTSPTACIWSKKKVRRGRVGEGTSGGSNCLFCMSLSQGSLEPRPLSAAGKLEEAAVAEVSSQKNWGSEKNWNSPSQGPASREPNKLCFPTYLHGEKKSLQMKEFIWCMEEWGIPEAVSSKACRNPSSSTDQGLSISDAVATKALVVLPPLKSSSHNLDSLSKKSRNIFWQPEEKVLGVEKDECMACPDELKGVDGKGEKAHFELASRLKVTNILPFPPTVTRTHLLSAESQRCCLHWSLLPQKSSVFPPNPTNIHYLATLQVLGQQGGQNCRTRLKAKEAKPPRTTPKHIVTEAKQESRPHVLESKVFPKPLLPSLTVSRVVIPVSTHRVL.

Over residues 136-153 (SQKNWGSEKNWNSPSQGP) the composition is skewed to polar residues. A disordered region spans residues 136–157 (SQKNWGSEKNWNSPSQGPASRE).

This is an uncharacterized protein from Rattus norvegicus (Rat).